Reading from the N-terminus, the 358-residue chain is Protein SGT1 homolog B (358 aa).

3 TPR repeats span residues 2–35, 37–69, and 70–103; these read AKEL…DPNC, AFFA…EPTL, and AKAY…APNE. The 90-residue stretch at 157-246 folds into the CS domain; that stretch reads KPMFRHEFYQ…AEIITWASLE (90 aa). Residues 255–275 are disordered; that stretch reads PKPNVSSALSQRPVYPSSKPA. The SGS domain occupies 268 to 358; that stretch reads VYPSSKPAKD…DGMELKKWEY (91 aa).

The protein belongs to the SGT1 family. In terms of assembly, interacts with RAR1 and HSP90-2. Interacts (via SGS domain) with HSC70-1 and HSC70-3.

It localises to the cytoplasm. It is found in the nucleus. Involved in plant innate immunity. Essential for race-specific resistance conferred by multiple R genes, including RPP7, recognizing different oomycete pathogen isolates like avirulent Hyaloperonospora arabidopsidis (downy mildew). Contributes additively with RAR1 to RPP5-dependent resistance. Not required for RPM1, RPS2, RPS4 and RPS5-mediated resistance. Functions as a negative regulator of RPS5 accumulation by assisting its degradation. May be involved in heat shock response by associating with HSC70-1 chaperone. Required for the SCF(TIR1)-mediated degradation of Aux/IAA proteins, but maybe not for SCF(TIR1) assembly or binding to its Aux/IAA substrates. Probably required for SCF-mediated ubiquitination, by coupling HSP90 to SCF complex for ubiquitination of HSP90 client proteins. Required for the coronatine/jasmonic acid-mediated signal transduction pathway. The sequence is that of Protein SGT1 homolog B from Arabidopsis thaliana (Mouse-ear cress).